Consider the following 206-residue polypeptide: Thymidylate kinase (206 aa).

ATP is bound at residue 14–21 (GGEGIGKS).

The protein belongs to the thymidylate kinase family.

The catalysed reaction is dTMP + ATP = dTDP + ADP. Phosphorylation of dTMP to form dTDP in both de novo and salvage pathways of dTTP synthesis. This is Thymidylate kinase from Rickettsia bellii (strain RML369-C).